The chain runs to 56 residues: Potassium channel toxin alpha-KTx 9.2 (56 aa).

Positions 1–28 (MSRLFTLVLIVLAMNVMMAIISDPVVEA) are cleaved as a signal peptide. 3 disulfides stabilise this stretch: Cys-31–Cys-47, Cys-34–Cys-52, and Cys-38–Cys-54.

As to expression, expressed by the venom gland.

Its subcellular location is the secreted. Its function is as follows. Blocks small conductance calcium-activated potassium channels (KCNN, SK). Low toxicity by intracerebroventricular injection into mice. This chain is Potassium channel toxin alpha-KTx 9.2, found in Olivierus martensii (Manchurian scorpion).